We begin with the raw amino-acid sequence, 340 residues long: L-threonine 3-dehydrogenase (340 aa).

C38 is a Zn(2+) binding site. Residues T40 and H43 each act as charge relay system in the active site. Zn(2+)-binding residues include H63, E64, C93, C96, C99, and C107. Residues I175, D195, R200, 261–263 (LGI), and 285–286 (IY) each bind NAD(+).

The protein belongs to the zinc-containing alcohol dehydrogenase family. As to quaternary structure, homotetramer. The cofactor is Zn(2+).

Its subcellular location is the cytoplasm. It carries out the reaction L-threonine + NAD(+) = (2S)-2-amino-3-oxobutanoate + NADH + H(+). Its pathway is amino-acid degradation; L-threonine degradation via oxydo-reductase pathway; glycine from L-threonine: step 1/2. Functionally, catalyzes the NAD(+)-dependent oxidation of L-threonine to 2-amino-3-ketobutyrate. This chain is L-threonine 3-dehydrogenase, found in Xanthomonas oryzae pv. oryzae (strain MAFF 311018).